Here is a 357-residue protein sequence, read N- to C-terminus: Metacaspase-3 (357 aa).

Residue histidine 168 is part of the active site. Positions 183, 199, and 200 each coordinate Ca(2+). Cysteine 223 is a catalytic residue. Aspartate 230 contributes to the Ca(2+) binding site.

This sequence belongs to the peptidase C14B family.

It is found in the recycling endosome. Activated by Ca(2+). In terms of biological role, cysteine protease that cleaves specifically after arginine or lysine residues. In the bloodstream form, may cleave inactive metacaspase-4 MCA4 prior to MCA4 secretion. The polypeptide is Metacaspase-3 (Trypanosoma brucei brucei).